The sequence spans 134 residues: ATP synthase epsilon chain (134 aa).

This sequence belongs to the ATPase epsilon chain family. As to quaternary structure, F-type ATPases have 2 components, CF(1) - the catalytic core - and CF(0) - the membrane proton channel. CF(1) has five subunits: alpha(3), beta(3), gamma(1), delta(1), epsilon(1). CF(0) has three main subunits: a, b and c.

Its subcellular location is the cell membrane. Produces ATP from ADP in the presence of a proton gradient across the membrane. This chain is ATP synthase epsilon chain, found in Pelotomaculum thermopropionicum (strain DSM 13744 / JCM 10971 / SI).